The primary structure comprises 384 residues: Probable L-aspartate decarboxylase (384 aa).

K233 carries the post-translational modification N6-(pyridoxal phosphate)lysine.

This sequence belongs to the group II decarboxylase family. MfnA subfamily. Pyridoxal 5'-phosphate is required as a cofactor.

The enzyme catalyses L-aspartate + H(+) = beta-alanine + CO2. It participates in cofactor biosynthesis; coenzyme A biosynthesis. Catalyzes the decarboxylation of L-aspartate to produce beta-alanine. This chain is Probable L-aspartate decarboxylase, found in Pyrococcus abyssi (strain GE5 / Orsay).